The chain runs to 324 residues: Probable UDP-sugar transporter protein SLC35A4 (324 aa).

At 1 to 18 the chain is on the cytoplasmic side; the sequence is MSVEDGGLPGLGGPGQAR. Residues 19 to 39 form a helical membrane-spanning segment; sequence WTLMLLLSTATYGAHAPLLAL. Topologically, residues 40–52 are lumenal; the sequence is CHVDGRVPFRPSS. Residues 53–73 traverse the membrane as a helical segment; that stretch reads AVLLTELTKLLLCALSLLVGW. The Cytoplasmic portion of the chain corresponds to 74-85; it reads QAWPPRTPPWRQ. A helical transmembrane segment spans residues 86-106; the sequence is AAPFALSALLYGANNNLVIHL. Residues 107–140 lie on the Lumenal side of the membrane; it reads QHYMDPSTYQVLSNLKIGSTALFYCLCLRRRLSA. Residues 141-161 traverse the membrane as a helical segment; the sequence is RQGLALLLLMAAGACYAAGGL. The Cytoplasmic portion of the chain corresponds to 162 to 177; that stretch reads RDPGSPLPESPSTAAS. The chain crosses the membrane as a helical span at residues 178 to 198; that stretch reads GPVPLHVTAPGLLLLLLYCLI. Residues 199-214 lie on the Lumenal side of the membrane; it reads SGLSSVYTELLLKRQR. Residues 215–235 traverse the membrane as a helical segment; that stretch reads LPLALQNLFLYTFGVLLNLGL. At 236-248 the chain is on the cytoplasmic side; the sequence is HAGGGPGPGLLEG. The helical transmembrane segment at 249-271 threads the bilayer; it reads FSGWAALVVLSQALNGLLMSAVM. Residues 272-279 lie on the Lumenal side of the membrane; the sequence is KHGSSITR. The helical transmembrane segment at 280 to 300 threads the bilayer; it reads LFVVSCSLVVNAVLSAALLRL. Residues 301 to 324 lie on the Cytoplasmic side of the membrane; that stretch reads QLTAAFFLAALLIGLAVHLYYGSR.

The protein belongs to the nucleotide-sugar transporter family. SLC35A subfamily. As to quaternary structure, found in a complex with SLC35A2 and SLC35A3.

Its subcellular location is the golgi apparatus membrane. The catalysed reaction is CDP-L-ribitol(in) + CDP(out) = CDP-L-ribitol(out) + CDP(in). Mediates the transport of CDP-ribitol. Does not exhibit CMP-sialic acid, UDP-galactose and UDP-N-acetylglucosamine transport activity. This is Probable UDP-sugar transporter protein SLC35A4 from Sus scrofa (Pig).